The following is a 334-amino-acid chain: Holliday junction branch migration complex subunit RuvB (334 aa).

Residues 4–184 (ADRLISAAVI…FGIVQRLEFY (181 aa)) form a large ATPase domain (RuvB-L) region. Residues Ile-23, Arg-24, Gly-65, Lys-68, Thr-69, Thr-70, 131-133 (EDY), Arg-174, Tyr-184, and Arg-221 each bind ATP. Thr-69 contributes to the Mg(2+) binding site. The tract at residues 185 to 255 (PVADLEHIVS…VAMKALDMLN (71 aa)) is small ATPAse domain (RuvB-S). The tract at residues 258–334 (AEGFDFMDRK…YKHFGITREE (77 aa)) is head domain (RuvB-H). The DNA site is built by Arg-294, Arg-313, and Arg-318.

The protein belongs to the RuvB family. As to quaternary structure, homohexamer. Forms an RuvA(8)-RuvB(12)-Holliday junction (HJ) complex. HJ DNA is sandwiched between 2 RuvA tetramers; dsDNA enters through RuvA and exits via RuvB. An RuvB hexamer assembles on each DNA strand where it exits the tetramer. Each RuvB hexamer is contacted by two RuvA subunits (via domain III) on 2 adjacent RuvB subunits; this complex drives branch migration. In the full resolvosome a probable DNA-RuvA(4)-RuvB(12)-RuvC(2) complex forms which resolves the HJ.

The protein localises to the cytoplasm. The enzyme catalyses ATP + H2O = ADP + phosphate + H(+). The RuvA-RuvB-RuvC complex processes Holliday junction (HJ) DNA during genetic recombination and DNA repair, while the RuvA-RuvB complex plays an important role in the rescue of blocked DNA replication forks via replication fork reversal (RFR). RuvA specifically binds to HJ cruciform DNA, conferring on it an open structure. The RuvB hexamer acts as an ATP-dependent pump, pulling dsDNA into and through the RuvAB complex. RuvB forms 2 homohexamers on either side of HJ DNA bound by 1 or 2 RuvA tetramers; 4 subunits per hexamer contact DNA at a time. Coordinated motions by a converter formed by DNA-disengaged RuvB subunits stimulates ATP hydrolysis and nucleotide exchange. Immobilization of the converter enables RuvB to convert the ATP-contained energy into a lever motion, pulling 2 nucleotides of DNA out of the RuvA tetramer per ATP hydrolyzed, thus driving DNA branch migration. The RuvB motors rotate together with the DNA substrate, which together with the progressing nucleotide cycle form the mechanistic basis for DNA recombination by continuous HJ branch migration. Branch migration allows RuvC to scan DNA until it finds its consensus sequence, where it cleaves and resolves cruciform DNA. This is Holliday junction branch migration complex subunit RuvB from Yersinia pestis bv. Antiqua (strain Angola).